The chain runs to 185 residues: Elongation factor P (185 aa).

It belongs to the elongation factor P family.

It is found in the cytoplasm. It functions in the pathway protein biosynthesis; polypeptide chain elongation. Involved in peptide bond synthesis. Stimulates efficient translation and peptide-bond synthesis on native or reconstituted 70S ribosomes in vitro. Probably functions indirectly by altering the affinity of the ribosome for aminoacyl-tRNA, thus increasing their reactivity as acceptors for peptidyl transferase. This Carboxydothermus hydrogenoformans (strain ATCC BAA-161 / DSM 6008 / Z-2901) protein is Elongation factor P.